A 113-amino-acid polypeptide reads, in one-letter code: Tachykinin-4 (113 aa).

Residues 1-20 (MLPCLALLLLMELSVCTVAG) form the signal peptide. A Methionine amide modification is found at M67. A propeptide spanning residues 71-79 (VGGRPLIQP) is cleaved from the precursor. The residue at position 95 (L95) is a Leucine amide. The propeptide occupies 98–113 (RSLFTEGREDEAQGSE).

The protein belongs to the tachykinin family. Expressed at low levels in the uterus of both pregnant and non-pregnant women. Isoform 1 is found only in the adrenal gland and fetal liver. Isoform 2 is found in heart, liver, bone marrow, prostate, adrenal gland and testis. Isoform 3 and isoform 4 are expressed predominantly in adrenal gland and placenta.

It localises to the secreted. Tachykinins are active peptides which excite neurons, evoke behavioral responses, are potent vasodilators and secretagogues, and contract (directly or indirectly) many smooth muscles. Endokinin-A induces thermal hyperalgesia and pain-related behavior such as scratching following intrathecal administration in rats. These effects are suppressed by treatment with endokinin-C. Endokinin-A/B reduces arterial blood pressure and increases sperm motility. The chain is Tachykinin-4 from Homo sapiens (Human).